The chain runs to 132 residues: Large-conductance mechanosensitive channel (132 aa).

Transmembrane regions (helical) follow at residues 14-34 (VIDLAVGVVIGAAFGKIVSSL), 38-58 (IITPLLGMVLGGVDFTGLKIT), and 69-89 (FIQTIFDFLIIAAAIFMFVKV).

This sequence belongs to the MscL family. As to quaternary structure, homopentamer.

The protein localises to the cell membrane. Functionally, channel that opens in response to stretch forces in the membrane lipid bilayer. May participate in the regulation of osmotic pressure changes within the cell. The protein is Large-conductance mechanosensitive channel of Bacillus thuringiensis (strain Al Hakam).